The sequence spans 369 residues: Serine/threonine-protein acetyltransferase HopZ1a (369 aa).

Residues 1-46 (MGNVCVGGSRMSHQVYSPDRADTPPRSERNTPDRRQRAAGDAERTQ) form a disordered region. Positions 19–46 (DRADTPPRSERNTPDRRQRAAGDAERTQ) are enriched in basic and acidic residues. Arg49, Lys53, and Arg106 together coordinate 1D-myo-inositol hexakisphosphate. Residues His150 and Glu170 contribute to the active site. Residue His150 participates in CoA binding. Residues Ala177 and 211–212 (KT) each bind CoA. Residue Cys216 is part of the active site. 1D-myo-inositol hexakisphosphate-binding positions include Asn222, 226–229 (KAHK), and 289–290 (KH). Lys289 carries the post-translational modification N6-acetyllysine; by autocatalysis. Residue 292-295 (ASLT) coordinates CoA. 1D-myo-inositol hexakisphosphate-binding positions include 314-317 (SEGH) and Arg326. Residues 331-334 (RVKR) and 344-348 (SNTQF) contribute to the CoA site. Residues Gln358 and Arg362 each coordinate 1D-myo-inositol hexakisphosphate.

The protein belongs to the acetyltransferase YopJ family. In terms of assembly, interacts with host plant JAZ proteins (e.g. Glycine max JAZ1 and Arabidospis thaliana TIFY10B/JAZ2, TIFY11A/JAZ5, TIFY11B/JAZ6, TIFY5A/JAZ8 and TIFY3B/JAZ12) and triggers their degradation. Binds directly to SZE1 and SZE2 at the host plasma membrane; this interaction with a complex made of, at least, SZE1, BKN2/SZE2, ZAR1 and ZED1 triggers host immunity. The cofactor is 1D-myo-inositol hexakisphosphate. Post-translationally, autoacetylated at Lys-289; while autoacetylation at Lys-289 is required for virulence function to some extent, it is not essential.

It localises to the secreted. The protein resides in the host cell membrane. Its subcellular location is the host cytoplasm. It is found in the host cytoskeleton. The protein localises to the host nucleus. The enzyme catalyses L-threonyl-[protein] + acetyl-CoA = O-acetyl-L-threonyl-[protein] + CoA. It catalyses the reaction L-seryl-[protein] + acetyl-CoA = O-acetyl-L-seryl-[protein] + CoA. It carries out the reaction L-lysyl-[protein] + acetyl-CoA = N(6)-acetyl-L-lysyl-[protein] + CoA + H(+). 1D-myo-inositol hexakisphosphate activates protein-acetyltransferase activity via an allosteric mechanism: 1D-myo-inositol hexakisphosphate-binding induces a conformational rearrangement that stimulates the interaction with acetyl-CoA. Acetyltransferase activity is activated by phytic acid. Its function is as follows. Serine/threonine-protein acetyltransferase translocated into infected cells, which impairs host microtubule network and host immunity by mediating acetylation of target proteins. Blocks secretion in host cells by mediating acetylation of host tubulin, thereby impairing host microbubule network. Impairs host cell immunity by mediating acetylation of host TIFY/JAZ transcription repressors (Arabidopsis thaliana TIFY10B/JAZ2, TIFY11A/JAZ5, TIFY11B/JAZ6, TIFY5A/JAZ8, TIFY9/JAZ10 and TIFY3B/JAZ12), thereby activating host jasmonate signaling. The protein is Serine/threonine-protein acetyltransferase HopZ1a of Pseudomonas syringae pv. syringae.